Consider the following 1045-residue polypeptide: MLRQVPRTLVAGGSALAVAVGVLVAPLATGAAAAPTYNYAEALQKSMFFYQAQRSGDLPADFPVSWRGDSGLTDGADVGKDLTGGWYDAGDHVKFGFPMAFSATMLAWGAIESPTGYSKAGSLDELKDNLRFVSDYFVKAHTAPNELYVQVGDGEADHKWWGPAEVMTMARPSHKISASCPGSDVAAETAAALASSAIVLKGDDPAYAATLVSHAKQLYTFADTYRGAYSDCVTAASAYYKSWSGYQDELVWGAYWLYKATGDATYLAKAEAEYDKLGTENQSTTRSYKWTIAWDNKQFGTYALLAMETGKQKYVDDANRWLDYWTVGVNGQKVPYSPGGQAVLDSWGALRYAANTSFVALVYSDWMTDATRKARYHDFGVRQINYALGDNPRSSSYVVGFGANPPTAPHHRTAHGSWLDSITTPAQSRHVLYGALVGGPGSPNDAYTDSRQDYVANEVATDYNAGFTSALARLVEEYGGTPLASFPTPEQPDGDQLFVEAMLNQPPSGTFTEVKAMIRNQSAFPARSLKNAKVRYWFTTDGFAASDVTLSANYSECGAQSGKGVSAGGTLGYVELSCVGQDIHPGGQSQHRREIQFRLTGPAGWNPANDPSYTGLTQTALAKASAITLYDGSTLVWGKEPTGTTTDTTPPTTPGTPVATGVTTVGASLSWAASTDAGSGVAGYELYRVQGTTQTLVGTTTAAAYILRDLTPGTAYSYVVKAKDVAGNVSAASAAVTFTTDTTGETEPPTTPGTPVASAVTSTGATLAWAPSTGDPAVSGYDVLRVQGTTTTVVAQTTVPTVTLSGLTPSTAYTYAVRAKNVAGDVSALSAPVTFTTAAPPVDTVAPTVPGTPVASNVATTGATLTWTASTDSGGSGLAGYEVLRVSGTTQTLVASPTTATVALAGLTPATAYSYVVRAKDGAGNVSAVSSPVTFTTLPVTSTPSCTVVYSTNSWNVGFTGSVKITNTGTTPLTWTLGFAFPSGQQVTQGWSATWSQTGTTVTATGLSWNATLQPGQSTDIGFNGSHPGTNTNPASFTVNGEVCG.

The N-terminal stretch at 1-33 is a signal peptide; sequence MLRQVPRTLVAGGSALAVAVGVLVAPLATGAAA. The interval 34–492 is catalytic; that stretch reads APTYNYAEAL…LASFPTPEQP (459 aa). D91 (nucleophile) is an active-site residue. Catalysis depends on residues H410, D449, and E458. One can recognise a CBM3 domain in the interval 493 to 642; the sequence is DGDQLFVEAM…STLVWGKEPT (150 aa). Linker ('hinge') (Pro-Thr box) stretches follow at residues 644-650, 734-748, 831-846, and 931-944; these read TTTDTTP, AAVT…ETEP, APVT…DTVA, and SPVT…TSTP. Fibronectin type-III domains follow at residues 653 to 743, 751 to 840, and 849 to 940; these read TPGT…TDTT, TPGT…TAAP, and VPGT…TLPV. One can recognise a CBM2 domain in the interval 939-1045; it reads PVTSTPSCTV…SFTVNGEVCG (107 aa). A disulfide bond links C946 and C1044.

Belongs to the glycosyl hydrolase 9 (cellulase E) family.

The catalysed reaction is Endohydrolysis of (1-&gt;4)-beta-D-glucosidic linkages in cellulose, lichenin and cereal beta-D-glucans.. In terms of biological role, the biological conversion of cellulose to glucose generally requires three types of hydrolytic enzymes: (1) Endoglucanases which cut internal beta-1,4-glucosidic bonds; (2) Exocellobiohydrolases that cut the disaccharide cellobiose from the non-reducing end of the cellulose polymer chain; (3) Beta-1,4-glucosidases which hydrolyze the cellobiose and other short cello-oligosaccharides to glucose. This is Endoglucanase B (cenB) from Cellulomonas fimi.